We begin with the raw amino-acid sequence, 595 residues long: ATP-dependent lipid A-core flippase (595 aa).

A disordered region spans residues 1–20 (MSQAYQPDSTKTSAKKSSAV). Residues 9 to 19 (STKTSAKKSSA) are compositionally biased toward low complexity. The next 4 helical transmembrane spans lie at 41–61 (WWAILLTITGFAINAGTEIWI), 81–101 (GLFPFIIVMLFFVRGVGSFLG), 169–189 (VIALMGFLLYSNWRLTLILFV), and 266–286 (INTPAVQLLMAVAMAVVVWLA). The region spanning 45-326 (LLTITGFAIN…LTDVNQQLQR (282 aa)) is the ABC transmembrane type-1 domain. One can recognise an ABC transporter domain in the interval 357–592 (IKLDNISLVY…HGHYAQMYAR (236 aa)). Position 390–397 (390–397 (GRSGAGKS)) interacts with ATP.

The protein belongs to the ABC transporter superfamily. Lipid exporter (TC 3.A.1.106) family. In terms of assembly, homodimer.

It localises to the cell inner membrane. It carries out the reaction ATP + H2O + lipid A-core oligosaccharideSide 1 = ADP + phosphate + lipid A-core oligosaccharideSide 2.. Involved in lipopolysaccharide (LPS) biosynthesis. Translocates lipid A-core from the inner to the outer leaflet of the inner membrane. Transmembrane domains (TMD) form a pore in the inner membrane and the ATP-binding domain (NBD) is responsible for energy generation. This is ATP-dependent lipid A-core flippase from Psychrobacter arcticus (strain DSM 17307 / VKM B-2377 / 273-4).